The primary structure comprises 216 residues: Ribosomal RNA small subunit methyltransferase G (216 aa).

S-adenosyl-L-methionine contacts are provided by residues glycine 83, methionine 88, 134–135, and arginine 149; that span reads VE.

The protein belongs to the methyltransferase superfamily. RNA methyltransferase RsmG family.

The protein localises to the cytoplasm. It carries out the reaction guanosine(527) in 16S rRNA + S-adenosyl-L-methionine = N(7)-methylguanosine(527) in 16S rRNA + S-adenosyl-L-homocysteine. Its function is as follows. Specifically methylates the N7 position of guanine in position 527 of 16S rRNA. The polypeptide is Ribosomal RNA small subunit methyltransferase G (Pseudomonas putida (strain GB-1)).